The primary structure comprises 524 residues: Lysine--tRNA ligase (524 aa).

The short motif at 39 to 47 (ASGIPHMGS) is the 'HIGH' region element. Positions 294–298 (KISKS) match the 'KMSKS' region motif. Lys-297 serves as a coordination point for ATP.

This sequence belongs to the class-I aminoacyl-tRNA synthetase family.

Its subcellular location is the cytoplasm. It carries out the reaction tRNA(Lys) + L-lysine + ATP = L-lysyl-tRNA(Lys) + AMP + diphosphate. The protein is Lysine--tRNA ligase (lysS) of Cenarchaeum symbiosum.